The following is a 193-amino-acid chain: Dual-action ribosomal maturation protein DarP (193 aa).

Over residues 1 to 10 the composition is skewed to basic and acidic residues; that stretch reads MRGRDEDTGE. 2 disordered regions span residues 1–20 and 171–193; these read MRGR…SQQR and QEQG…EDDE. Residues 181–193 are compositionally biased toward acidic residues; that stretch reads GLEDGESALEDDE.

Belongs to the DarP family.

The protein localises to the cytoplasm. Member of a network of 50S ribosomal subunit biogenesis factors which assembles along the 30S-50S interface, preventing incorrect 23S rRNA structures from forming. Promotes peptidyl transferase center (PTC) maturation. The chain is Dual-action ribosomal maturation protein DarP from Xanthomonas oryzae pv. oryzae (strain KACC10331 / KXO85).